The sequence spans 175 residues: DELTA-stichotoxin-Hcr4a (175 aa).

Positions 1 to 10 (ALAGAIIAGA) are plays an important role in the hemolytic activity. Positions 9-28 (GASLTFQILDKVLAELGQVS) are N-terminal region. Positions 52, 85, 103, 105, 131, 135, and 136 each coordinate phosphocholine. The tract at residues 103–118 (SVPFDYNLYSNWWDVK) is trp-rich region, which is important for the binding to lipid membrane.

Belongs to the actinoporin family. Sea anemone subfamily. In terms of assembly, octamer or nonamer in membranes. Monomer in the soluble state.

The protein localises to the secreted. It localises to the nematocyst. It is found in the target cell membrane. In terms of biological role, pore-forming protein that forms cations-selective hydrophilic pores of around 1 nm and causes cardiac stimulation and cytolysis. Pore formation is a multi-step process that involves specific recognition of membrane sphingomyelin (but neither cholesterol nor phosphatidylcholine) using aromatic rich region and adjacent phosphocholine (POC) binding site, firm binding to the membrane (mainly driven by hydrophobic interactions) accompanied by the transfer of the N-terminal region to the lipid-water interface and finally pore formation after oligomerization of monomers. This is DELTA-stichotoxin-Hcr4a from Radianthus crispa (Leathery sea anemone).